We begin with the raw amino-acid sequence, 122 residues long: UPF0738 protein YjbL (122 aa).

Belongs to the UPF0738 family.

This Bacillus subtilis (strain 168) protein is UPF0738 protein YjbL (yjbL).